The sequence spans 275 residues: Putative replication protein (275 aa).

Residues 98 to 198 (SKAICFTPYD…RILKISEDYF (101 aa)) form the BRCT domain.

The protein is Putative replication protein of Wigglesworthia glossinidia brevipalpis.